The following is a 275-amino-acid chain: Protein rolling stone (275 aa).

A run of 6 helical transmembrane segments spans residues 45–65 (LLYR…CVIV), 72–92 (FFIY…LISA), 127–147 (WLYN…WVFL), 162–182 (IITH…IAFP), 185–205 (ILHM…TLIY), and 232–252 (MVTF…LFGL).

In terms of tissue distribution, expressed in cells of the somatic mesoderm, most notably the muscle founder cells, between embryonic stages 12 and 14, in growing muscle fibers in dorsal, lateral and ventral positions. At stage 16 strongest expression is in some ventral muscles and muscle 8. At stages 16/17 expression is restricted to some cells of the CNS, the brain and the gonads.

The protein localises to the membrane. In terms of biological role, may have a central role in the fusion process during myogenesis, within the somatic mesoderm. The protein is Protein rolling stone (rost) of Drosophila melanogaster (Fruit fly).